A 287-amino-acid chain; its full sequence is ATP synthase gamma chain (287 aa).

The protein belongs to the ATPase gamma chain family. As to quaternary structure, F-type ATPases have 2 components, CF(1) - the catalytic core - and CF(0) - the membrane proton channel. CF(1) has five subunits: alpha(3), beta(3), gamma(1), delta(1), epsilon(1). CF(0) has three main subunits: a, b and c.

Its subcellular location is the cell inner membrane. Functionally, produces ATP from ADP in the presence of a proton gradient across the membrane. The gamma chain is believed to be important in regulating ATPase activity and the flow of protons through the CF(0) complex. This is ATP synthase gamma chain from Alkalilimnicola ehrlichii (strain ATCC BAA-1101 / DSM 17681 / MLHE-1).